A 462-amino-acid polypeptide reads, in one-letter code: uncharacterized protein (462 aa).

WD repeat units follow at residues 170 to 209 (GGER…EVQL), 212 to 260 (GHTD…PLLR), 263 to 302 (GHLA…ELLM), 305 to 344 (GHSE…SIMV), 347 to 386 (EHIR…LAHT), 389 to 430 (AHSS…LIKS), and 433 to 462 (GHEE…LWYP).

It localises to the cytoplasm. This is an uncharacterized protein from Schizosaccharomyces pombe (strain 972 / ATCC 24843) (Fission yeast).